The primary structure comprises 241 residues: Putative hydrolase 080R (241 aa).

The region spanning 50 to 241 (FPDLSFNLMV…VIKVQKIMIL (192 aa)) is the Nudix hydrolase domain. Positions 136 to 157 (GHCNGNEPVLSTLLREFREETT) match the Nudix box motif. Positions 151, 155, and 204 each coordinate Mg(2+).

Belongs to the Nudix hydrolase family.

In Aedes vexans (Inland floodwater mosquito), this protein is Putative hydrolase 080R.